A 324-amino-acid polypeptide reads, in one-letter code: ATP-dependent 6-phosphofructokinase (324 aa).

Glycine 11 contributes to the ATP binding site. 21 to 25 is an ADP binding site; it reads RAVVR. Residues 72 to 73 and 102 to 105 contribute to the ATP site; these read RE and GNGS. Residue asparagine 103 participates in Mg(2+) binding. 126 to 128 is a binding site for substrate; sequence TID. The active-site Proton acceptor is aspartate 128. Lysine 155 is a binding site for ADP. Substrate-binding positions include arginine 163 and 170–172; that span reads MGR. ADP is bound by residues 186–188 and 214–216; these read GAE and KNF. Residues glutamate 223, arginine 248, and 254–257 each bind substrate; that span reads YIQR.

This sequence belongs to the phosphofructokinase type A (PFKA) family. ATP-dependent PFK group I subfamily. Prokaryotic clade 'B1' sub-subfamily. Homotetramer. Mg(2+) serves as cofactor.

It is found in the cytoplasm. The catalysed reaction is beta-D-fructose 6-phosphate + ATP = beta-D-fructose 1,6-bisphosphate + ADP + H(+). It participates in carbohydrate degradation; glycolysis; D-glyceraldehyde 3-phosphate and glycerone phosphate from D-glucose: step 3/4. Allosterically activated by ADP and other diphosphonucleosides, and allosterically inhibited by phosphoenolpyruvate. Functionally, catalyzes the phosphorylation of D-fructose 6-phosphate to fructose 1,6-bisphosphate by ATP, the first committing step of glycolysis. The polypeptide is ATP-dependent 6-phosphofructokinase (Sulfurihydrogenibium sp. (strain YO3AOP1)).